The following is a 750-amino-acid chain: Polyribonucleotide nucleotidyltransferase (750 aa).

The Mg(2+) site is built by aspartate 519 and aspartate 525. The 60-residue stretch at 585–644 (PRVIAVKIPVDKIGEVIGPKGKMINQIQEDTGADISIEDDGTVYIGATNGPSADAARSAI) folds into the KH domain. An S1 motif domain is found at 656–728 (GERYLGTVVK…DRGKLSLSPV (73 aa)). The disordered stretch occupies residues 725–750 (LSPVVAEEEGAASEDAPAEAAEESAE). Acidic residues predominate over residues 730–750 (AEEEGAASEDAPAEAAEESAE).

The protein belongs to the polyribonucleotide nucleotidyltransferase family. Mg(2+) serves as cofactor.

It localises to the cytoplasm. It carries out the reaction RNA(n+1) + phosphate = RNA(n) + a ribonucleoside 5'-diphosphate. Its function is as follows. Involved in mRNA degradation. Catalyzes the phosphorolysis of single-stranded polyribonucleotides processively in the 3'- to 5'-direction. In Paenarthrobacter aurescens (strain TC1), this protein is Polyribonucleotide nucleotidyltransferase.